The primary structure comprises 1258 residues: Phosphatidylinositol 3,4,5-trisphosphate 5-phosphatase 2 (1258 aa).

The region spanning 21–117 (WYHRDLSRAA…GLVCALLLPV (97 aa)) is the SH2 domain. Residues 119 to 132 (GEREPDPPDDRDAS) show a composition bias toward basic and acidic residues. Residues 119–180 (GEREPDPPDD…AESAPNGLST (62 aa)) are disordered. Residue S132 is modified to Phosphoserine. The segment covering 145-155 (SGSTSISAPTG) has biased composition (polar residues). The span at 156–166 (PSSPLPAPETP) shows a compositional bias: pro residues. The residue at position 165 (T165) is a Phosphothreonine. A phosphoserine mark is found at S241 and S352. Y886 is subject to Phosphotyrosine. Phosphoserine is present on S890. The segment at 897-1118 (GAKSKAPSVS…FLGEVASGDD (222 aa)) is disordered. Residues 938-950 (PPPTGRPPAPPRA) show a composition bias toward pro residues. Positions 944-949 (PPAPPR) match the SH3-binding motif. Residues 951–965 (APREEPLTPRLKPEG) show a composition bias toward basic and acidic residues. T958 carries the phosphothreonine modification. Residues 983 to 986 (NPAY) carry the NPXY motif motif. Position 986 is a phosphotyrosine; by SRC (Y986). Composition is skewed to pro residues over residues 996-1007 (LLPPEPPSPARA), 1048-1059 (LPPPDFPPPPLP), and 1087-1104 (GPPPPKAHPRPPLPPGPS). S1131 is subject to Phosphoserine. Phosphotyrosine occurs at positions 1135 and 1162. The SAM domain occupies 1196–1258 (LGEAGMSAWL…LLLDTLQLSK (63 aa)). The residue at position 1257 (S1257) is a Phosphoserine.

It belongs to the inositol 1,4,5-trisphosphate 5-phosphatase family. Interacts with tyrosine phosphorylated form of SHC1. Interacts with EGFR. Upon stimulation by the EGF signaling pathway, it forms a complex with SHC1 and EGFR. Interacts with cytoskeletal protein SORBS3/vinexin, promoting its localization to the periphery of cells. Forms a complex with filamin (FLNA or FLNB), actin, GPIb (GP1BA or GP1BB) that regulates cortical and submembraneous actin. Interacts with c-Met/MET, when c-Met/MET is phosphorylated on 'Tyr-1356'. Interacts with p130Cas/BCAR1. Interacts with CENTD3/ARAP3 via its SAM domain. Interacts with c-Cbl/CBL and CAP/SORBS1. Interacts with activated EPHA2 receptor. Interacts with receptor FCGR2A. Interacts with receptor FCGR2B. Interacts with tyrosine kinase ABL1. Interacts with tyrosine kinase TEC. Interacts with CSF1R. Interacts (via N-terminus) with SH3YL1 (via SH3 domain). Interacts with FCRL6 (tyrosine phosphorylated form). Interacts (via SH2 domain) with tyrosine phosphorylated KLRC1 (via ITIM). Interacts with NEDD9/HEF1. In terms of processing, tyrosine phosphorylated by the members of the SRC family after exposure to a diverse array of extracellular stimuli such as insulin, growth factors such as EGF or PDGF, chemokines, integrin ligands and hypertonic and oxidative stress. May be phosphorylated upon IgG receptor FCGR2B-binding. Phosphorylated at Tyr-986 following cell attachment and spreading. Phosphorylated at Tyr-1162 following EGF signaling pathway stimulation. Phosphorylated at Thr-958 in response to PDGF. In terms of tissue distribution, widely expressed, most prominently in skeletal muscle, heart and brain. Present in platelets. Expressed in transformed myeloid cells and in primary macrophages, but not in peripheral blood monocytes.

The protein localises to the cytoplasm. Its subcellular location is the cytosol. The protein resides in the cytoskeleton. It is found in the membrane. It localises to the cell projection. The protein localises to the filopodium. Its subcellular location is the lamellipodium. The protein resides in the basal cell membrane. It is found in the nucleus. It localises to the nucleus speckle. The protein localises to the spindle pole. It carries out the reaction a 1,2-diacyl-sn-glycero-3-phospho-(1D-myo-inositol-3,4,5-trisphosphate) + H2O = a 1,2-diacyl-sn-glycero-3-phospho-(1D-myo-inositol-3,4-bisphosphate) + phosphate. It catalyses the reaction 1,2-dioctanoyl-sn-glycero-3-phospho-(1D-myo-inositol-3,4,5-trisphosphate) + H2O = 1,2-dioctanoyl-sn-glycero-3-phospho-(1D-myo-inositol-3,4-bisphosphate) + phosphate. The catalysed reaction is 1,2-dihexadecanoyl-sn-glycero-3-phospho-(1D-myo-inositol-3,4,5-trisphosphate) + H2O = 1,2-dihexadecanoyl-sn-glycero-3-phospho-(1D-myo-inositol-3,4-bisphosphate) + phosphate. Its activity is regulated as follows. Activated upon translocation to the sites of synthesis of PtdIns(3,4,5)P3 in the membrane. Enzymatic activity is enhanced in the presence of phosphatidylserine. In terms of biological role, phosphatidylinositol (PtdIns) phosphatase that specifically hydrolyzes the 5-phosphate of phosphatidylinositol-3,4,5-trisphosphate (PtdIns(3,4,5)P3) to produce PtdIns(3,4)P2, thereby negatively regulating the PI3K (phosphoinositide 3-kinase) pathways. Required for correct mitotic spindle orientation and therefore progression of mitosis. Plays a central role in regulation of PI3K-dependent insulin signaling, although the precise molecular mechanisms and signaling pathways remain unclear. While overexpression reduces both insulin-stimulated MAP kinase and Akt activation, its absence does not affect insulin signaling or GLUT4 trafficking. Confers resistance to dietary obesity. May act by regulating AKT2, but not AKT1, phosphorylation at the plasma membrane. Part of a signaling pathway that regulates actin cytoskeleton remodeling. Required for the maintenance and dynamic remodeling of actin structures as well as in endocytosis, having a major impact on ligand-induced EGFR internalization and degradation. Participates in regulation of cortical and submembraneous actin by hydrolyzing PtdIns(3,4,5)P3 thereby regulating membrane ruffling. Regulates cell adhesion and cell spreading. Required for HGF-mediated lamellipodium formation, cell scattering and spreading. Acts as a negative regulator of EPHA2 receptor endocytosis by inhibiting via PI3K-dependent Rac1 activation. Acts as a regulator of neuritogenesis by regulating PtdIns(3,4,5)P3 level and is required to form an initial protrusive pattern, and later, maintain proper neurite outgrowth. Acts as a negative regulator of the FC-gamma-RIIA receptor (FCGR2A). Mediates signaling from the FC-gamma-RIIB receptor (FCGR2B), playing a central role in terminating signal transduction from activating immune/hematopoietic cell receptor systems. Involved in EGF signaling pathway. Upon stimulation by EGF, it is recruited by EGFR and dephosphorylates PtdIns(3,4,5)P3. Plays a negative role in regulating the PI3K-PKB pathway, possibly by inhibiting PKB activity. Down-regulates Fc-gamma-R-mediated phagocytosis in macrophages independently of INPP5D/SHIP1. In macrophages, down-regulates NF-kappa-B-dependent gene transcription by regulating macrophage colony-stimulating factor (M-CSF)-induced signaling. Plays a role in the localization of AURKA and NEDD9/HEF1 to the basolateral membrane at interphase in polarized cysts, thereby mediates cell cycle homeostasis, cell polarization and cilia assembly. Additionally promotion of cilia growth is also facilitated by hydrolysis of (PtdIns(3,4,5)P3) to PtdIns(3,4)P2. Promotes formation of apical membrane-initiation sites during the initial stages of lumen formation via Rho family-induced actin filament organization and CTNNB1 localization to cell-cell contacts. May also hydrolyze PtdIns(1,3,4,5)P4, and could thus affect the levels of the higher inositol polyphosphates like InsP6. Involved in endochondral ossification. This Homo sapiens (Human) protein is Phosphatidylinositol 3,4,5-trisphosphate 5-phosphatase 2.